The primary structure comprises 1222 residues: ATP-dependent helicase/nuclease subunit A (1222 aa).

The UvrD-like helicase ATP-binding domain maps to 39-495; sequence QKRTAQQIEA…ILLKENFRSQ (457 aa). Residue 60–67 participates in ATP binding; the sequence is ASAGSGKT. The UvrD-like helicase C-terminal domain maps to 524–810; the sequence is QLIAGSHAQT…NLMTIHKSKG (287 aa).

Belongs to the helicase family. AddA subfamily. Heterodimer of AddA and AddB/RexB. Requires Mg(2+) as cofactor.

The enzyme catalyses Couples ATP hydrolysis with the unwinding of duplex DNA by translocating in the 3'-5' direction.. It carries out the reaction ATP + H2O = ADP + phosphate + H(+). Its function is as follows. The heterodimer acts as both an ATP-dependent DNA helicase and an ATP-dependent, dual-direction single-stranded exonuclease. Recognizes the chi site generating a DNA molecule suitable for the initiation of homologous recombination. The AddA nuclease domain is required for chi fragment generation; this subunit has the helicase and 3' -&gt; 5' nuclease activities. This is ATP-dependent helicase/nuclease subunit A from Streptococcus pyogenes serotype M12 (strain MGAS9429).